The primary structure comprises 331 residues: Pantothenate kinase (331 aa).

109–116 (GSVAVGKS) is a binding site for ATP.

It belongs to the prokaryotic pantothenate kinase family.

It is found in the cytoplasm. It carries out the reaction (R)-pantothenate + ATP = (R)-4'-phosphopantothenate + ADP + H(+). The protein operates within cofactor biosynthesis; coenzyme A biosynthesis; CoA from (R)-pantothenate: step 1/5. The chain is Pantothenate kinase from Rhizobium etli (strain CIAT 652).